Reading from the N-terminus, the 335-residue chain is Fructose-1,6-bisphosphatase class 1 (335 aa).

The Mg(2+) site is built by E89, D112, L114, and D115. Substrate-binding positions include 115–118 (DGSS), N208, Y241, and K271. Mg(2+) is bound at residue E277.

The protein belongs to the FBPase class 1 family. In terms of assembly, homotetramer. Requires Mg(2+) as cofactor.

It localises to the cytoplasm. The enzyme catalyses beta-D-fructose 1,6-bisphosphate + H2O = beta-D-fructose 6-phosphate + phosphate. It functions in the pathway carbohydrate biosynthesis; gluconeogenesis. The sequence is that of Fructose-1,6-bisphosphatase class 1 from Proteus mirabilis (strain HI4320).